The chain runs to 103 residues: RNA-binding protein YlxQ (103 aa).

Belongs to the eukaryotic ribosomal protein eL8 family.

In terms of biological role, RNA-binding protein that recognizes the K-turn motif present in ribosomal RNA, but also in box C/D and box C'/D' sRNAs. The polypeptide is RNA-binding protein YlxQ (Enterococcus faecium (Streptococcus faecium)).